Consider the following 440-residue polypeptide: Chromosomal replication initiator protein DnaA (440 aa).

The interval 1–72 (MTELDSLWEA…KEFAQRELGR (72 aa)) is domain I, interacts with DnaA modulators. A domain II region spans residues 72–103 (RNIEPHYVLEGEFTYTNKKTEDDPTPSFEMDT). A domain III, AAA+ region region spans residues 104–320 (PLNPHYNFGT…GALTKVQAFA (217 aa)). ATP-binding residues include G148, G150, K151, and T152. The domain IV, binds dsDNA stretch occupies residues 321–440 (NLSGERITPS…ITKLKAKLRS (120 aa)).

The protein belongs to the DnaA family. Oligomerizes as a right-handed, spiral filament on DNA at oriC.

The protein localises to the cytoplasm. In terms of biological role, plays an essential role in the initiation and regulation of chromosomal replication. ATP-DnaA binds to the origin of replication (oriC) to initiate formation of the DNA replication initiation complex once per cell cycle. Binds the DnaA box (a 9 base pair repeat at the origin) and separates the double-stranded (ds)DNA. Forms a right-handed helical filament on oriC DNA; dsDNA binds to the exterior of the filament while single-stranded (ss)DNA is stabiized in the filament's interior. The ATP-DnaA-oriC complex binds and stabilizes one strand of the AT-rich DNA unwinding element (DUE), permitting loading of DNA polymerase. After initiation quickly degrades to an ADP-DnaA complex that is not apt for DNA replication. Binds acidic phospholipids. This Limosilactobacillus reuteri (strain DSM 20016) (Lactobacillus reuteri) protein is Chromosomal replication initiator protein DnaA.